Here is a 710-residue protein sequence, read N- to C-terminus: Polyribonucleotide nucleotidyltransferase (710 aa).

Mg(2+) is bound by residues Asp486 and Asp492. One can recognise a KH domain in the interval 553–612; the sequence is PRIHTIKISVDKIKDVIGKGGSVIRALTEETGTTIEIEDDGTVKIAATDGDKAKFAIRRI. One can recognise an S1 motif domain in the interval 622-690; that stretch reads GRIYNGKVTR…RQGRVRLSIK (69 aa). The segment at 690–710 is disordered; it reads KEAGEQAQPEAEAVPAAPEAE. Residues 694-710 are compositionally biased toward low complexity; the sequence is EQAQPEAEAVPAAPEAE.

The protein belongs to the polyribonucleotide nucleotidyltransferase family. As to quaternary structure, component of the RNA degradosome, which is a multiprotein complex involved in RNA processing and mRNA degradation. Requires Mg(2+) as cofactor.

The protein localises to the cytoplasm. It catalyses the reaction RNA(n+1) + phosphate = RNA(n) + a ribonucleoside 5'-diphosphate. Its function is as follows. Involved in mRNA degradation. Catalyzes the phosphorolysis of single-stranded polyribonucleotides processively in the 3'- to 5'-direction. The polypeptide is Polyribonucleotide nucleotidyltransferase (Erwinia tasmaniensis (strain DSM 17950 / CFBP 7177 / CIP 109463 / NCPPB 4357 / Et1/99)).